We begin with the raw amino-acid sequence, 102 residues long: Small ribosomal subunit protein uS10 (102 aa).

This sequence belongs to the universal ribosomal protein uS10 family. As to quaternary structure, part of the 30S ribosomal subunit.

Functionally, involved in the binding of tRNA to the ribosomes. The polypeptide is Small ribosomal subunit protein uS10 (Symbiobacterium thermophilum (strain DSM 24528 / JCM 14929 / IAM 14863 / T)).